Here is a 382-residue protein sequence, read N- to C-terminus: Nitric oxide reductase FlRd-NAD(+) reductase (382 aa).

It belongs to the FAD-dependent oxidoreductase family. FAD serves as cofactor.

The protein localises to the cytoplasm. It catalyses the reaction 2 reduced [nitric oxide reductase rubredoxin domain] + NAD(+) + H(+) = 2 oxidized [nitric oxide reductase rubredoxin domain] + NADH. It functions in the pathway nitrogen metabolism; nitric oxide reduction. Its function is as follows. One of at least two accessory proteins for anaerobic nitric oxide (NO) reductase. Reduces the rubredoxin moiety of NO reductase. The chain is Nitric oxide reductase FlRd-NAD(+) reductase from Vibrio vulnificus (strain CMCP6).